Reading from the N-terminus, the 467-residue chain is Inactive pancreatic lipase-related protein 1 (467 aa).

Residues 1–17 form the signal peptide; sequence MLIFWTITLFLLGAAKG. Intrachain disulfides connect C21-C27 and C109-C120. S171 serves as the catalytic Nucleophile. Catalysis depends on D194, which acts as the Charge relay system. Ca(2+)-binding residues include E205, R208, D210, and D213. C255 and C279 are disulfide-bonded. The Charge relay system role is filled by H281. 3 disulfide bridges follow: C303-C314, C317-C322, and C451-C467. The region spanning 356 to 467 is the PLAT domain; sequence WRYGVSITLS…EDTLLTLTPC (112 aa).

It belongs to the AB hydrolase superfamily. Lipase family. As to expression, pancreas.

The protein resides in the secreted. Its function is as follows. May function as inhibitor of dietary triglyceride digestion. Lacks detectable lipase activity towards triglycerides, diglycerides, phosphatidylcholine, galactolipids or cholesterol esters (in vitro). In Homo sapiens (Human), this protein is Inactive pancreatic lipase-related protein 1 (PNLIPRP1).